A 435-amino-acid chain; its full sequence is Xylose isomerase (435 aa).

Residues D306 and D308 each contribute to the Mg(2+) site.

It belongs to the xylose isomerase family. Homotetramer. Mg(2+) serves as cofactor.

The protein resides in the cytoplasm. The catalysed reaction is alpha-D-xylose = alpha-D-xylulofuranose. The polypeptide is Xylose isomerase (Brucella melitensis biotype 2 (strain ATCC 23457)).